The primary structure comprises 209 residues: Small ribosomal subunit protein uS4 (209 aa).

Residues 99 to 162 (RRLDNVVYRL…RESNKFQEMK (64 aa)) form the S4 RNA-binding domain.

Belongs to the universal ribosomal protein uS4 family. Part of the 30S ribosomal subunit. Contacts protein S5. The interaction surface between S4 and S5 is involved in control of translational fidelity.

Functionally, one of the primary rRNA binding proteins, it binds directly to 16S rRNA where it nucleates assembly of the body of the 30S subunit. In terms of biological role, with S5 and S12 plays an important role in translational accuracy. This Syntrophomonas wolfei subsp. wolfei (strain DSM 2245B / Goettingen) protein is Small ribosomal subunit protein uS4.